A 150-amino-acid chain; its full sequence is Large ribosomal subunit protein uL15 (150 aa).

The span at 1–13 shows a compositional bias: basic and acidic residues; it reads MADNDAIKVHDLR. The interval 1–44 is disordered; sequence MADNDAIKVHDLRPAPGAKTAKTRVGRGEASKGKTAGRGTKGTK.

It belongs to the universal ribosomal protein uL15 family. Part of the 50S ribosomal subunit.

Its function is as follows. Binds to the 23S rRNA. The sequence is that of Large ribosomal subunit protein uL15 from Micrococcus luteus (strain ATCC 4698 / DSM 20030 / JCM 1464 / CCM 169 / CCUG 5858 / IAM 1056 / NBRC 3333 / NCIMB 9278 / NCTC 2665 / VKM Ac-2230) (Micrococcus lysodeikticus).